The sequence spans 256 residues: Low molecular mass lipoprotein PBMHP-6 (256 aa).

The first 19 residues, 1 to 19 (MRLTLFAFVLAVCALASNA), serve as a signal peptide directing secretion.

Belongs to the 30 kDa lipoprotein family.

It localises to the secreted. This is Low molecular mass lipoprotein PBMHP-6 from Bombyx mori (Silk moth).